The primary structure comprises 486 residues: UDP-N-acetylmuramate--L-alanine ligase (486 aa).

An ATP-binding site is contributed by 126–132 (GTHGKTT).

It belongs to the MurCDEF family.

Its subcellular location is the cytoplasm. It carries out the reaction UDP-N-acetyl-alpha-D-muramate + L-alanine + ATP = UDP-N-acetyl-alpha-D-muramoyl-L-alanine + ADP + phosphate + H(+). Its pathway is cell wall biogenesis; peptidoglycan biosynthesis. Cell wall formation. The sequence is that of UDP-N-acetylmuramate--L-alanine ligase from Pectobacterium atrosepticum (strain SCRI 1043 / ATCC BAA-672) (Erwinia carotovora subsp. atroseptica).